We begin with the raw amino-acid sequence, 345 residues long: Phenylalanine--tRNA ligase alpha subunit (345 aa).

Glu253 serves as a coordination point for Mg(2+).

The protein belongs to the class-II aminoacyl-tRNA synthetase family. Phe-tRNA synthetase alpha subunit type 1 subfamily. As to quaternary structure, tetramer of two alpha and two beta subunits. Requires Mg(2+) as cofactor.

The protein resides in the cytoplasm. The enzyme catalyses tRNA(Phe) + L-phenylalanine + ATP = L-phenylalanyl-tRNA(Phe) + AMP + diphosphate + H(+). The chain is Phenylalanine--tRNA ligase alpha subunit from Lawsonia intracellularis (strain PHE/MN1-00).